A 909-amino-acid polypeptide reads, in one-letter code: Protein translocase subunit SecA (909 aa).

Residues Q87, 105–109 (GEGKT), and D512 contribute to the ATP site. The tract at residues 863–909 (LVGGGDEDDESIAAHTPMIRDGDKVGRNDPCPCGSGRKYKQCHGKLS) is disordered. Positions 880–889 (MIRDGDKVGR) are enriched in basic and acidic residues. C893, C895, C904, and H905 together coordinate Zn(2+). Basic residues predominate over residues 899–909 (RKYKQCHGKLS).

Belongs to the SecA family. In terms of assembly, monomer and homodimer. Part of the essential Sec protein translocation apparatus which comprises SecA, SecYEG and auxiliary proteins SecDF-YajC and YidC. Zn(2+) serves as cofactor.

It is found in the cell inner membrane. Its subcellular location is the cytoplasm. It catalyses the reaction ATP + H2O + cellular proteinSide 1 = ADP + phosphate + cellular proteinSide 2.. In terms of biological role, part of the Sec protein translocase complex. Interacts with the SecYEG preprotein conducting channel. Has a central role in coupling the hydrolysis of ATP to the transfer of proteins into and across the cell membrane, serving both as a receptor for the preprotein-SecB complex and as an ATP-driven molecular motor driving the stepwise translocation of polypeptide chains across the membrane. The polypeptide is Protein translocase subunit SecA (Shewanella putrefaciens (strain CN-32 / ATCC BAA-453)).